A 465-amino-acid chain; its full sequence is Mothers against decapentaplegic homolog 1 (465 aa).

Positions Pro-12–Pro-136 constitute an MH1 domain. Zn(2+) contacts are provided by Cys-64, Cys-109, Cys-121, and His-126. Residues Gln-161 to Gln-240 are disordered. Residues Pro-179 to Ser-210 show a composition bias toward low complexity. An MH2 domain is found at Trp-271–Ser-465. A phosphoserine mark is found at Ser-463 and Ser-465.

This sequence belongs to the dwarfin/SMAD family. As to quaternary structure, found in a complex with SMAD4 and YY1. Interacts with HGS, NANOG and ZCCHC12. Upon C-terminus phosphorylation: forms trimers with another SMAD1 and the co-SMAD SMAD4. Interacts with PEBP2-alpha subunit, CREB-binding protein (CBP), p300, SMURF1, SMURF2, USP15 and HOXC8. Associates with ZNF423 or ZNF521 in response to BMP2 leading to activate transcription of BMP target genes. Interacts with SKOR1. Interacts (via MH2 domain) with LEMD3. Binding to LEMD3 results in at least a partial reduction of receptor-mediated phosphorylation. Forms a ternary complex with PSMB4 and OAZ1 before PSMB4 is incorporated into the 20S proteasome. Found in a macromolecular complex with FAM83G. Interacts (via MH2 domain) with FAM83G (via MH2 domain); in a SMAD4-independent manner. Interacts with ZC3H3. Interacts with TMEM119. Interacts (via MH1 and MH2 domains) with ZNF8. Interacts with RANBP3L; the interaction increases when SMAD1 is not phosphorylated and mediates SMAD1 nuclear export. Interacts with EGR1; this interaction inhibits SMAD1 dephosphorylation. Interacts with SMAD6. Interacts with YAP1. In terms of processing, phosphorylation of the C-terminal SVS motif by BMP type 1 receptor kinase activates SMAD1 by promoting dissociation from the receptor and trimerization with SMAD4. Phosphorylation by ERK2 MAP kinase in response to EGF or HGF prevents SMAD1 nuclear accumulation and transcriptional activity in response to BMP. Dephosphorylation, probably by PPM1A, induces its export from the nucleus to the cytoplasm. Dephosphorylation is inhibited by association with EGR1. Phosphorylation by CDK8/9 creates binding sites for YAP1, and subsequent phosphorylation by GSK3 switches off YAP1 binding and adds binding sites for SMURF1. Ubiquitinated by SMAD-specific E3 ubiquitin ligase SMURF1, leading to its degradation. Monoubiquitinated, leading to prevent DNA-binding. Deubiquitination by USP15 alleviates inhibition and promotes activation of TGF-beta target genes. Dephosphorylation, probably by PPM1A, induces its export from the nucleus to the cytoplasm. Phospho-SMAD1 is ubiquitinated by CHIP leading to disruption of the SMAD1-SMAD4 complex.

It is found in the cytoplasm. It localises to the nucleus. Its function is as follows. Transcriptional modulator that plays a role in various cellular processes, including embryonic development, cell differentiation, and tissue homeostasis. Upon BMP ligand binding to their receptors at the cell surface, is phosphorylated by activated type I BMP receptors (BMPRIs) and associates with SMAD4 to form an heteromeric complex which translocates into the nucleus acting as transcription factor. In turn, the hetero-trimeric complex recognizes cis-regulatory elements containing Smad Binding Elements (SBEs) to modulate the outcome of the signaling network. SMAD1/OAZ1/PSMB4 complex mediates the degradation of the CREBBP/EP300 repressor SNIP1. This is Mothers against decapentaplegic homolog 1 (SMAD1) from Coturnix japonica (Japanese quail).